The chain runs to 589 residues: Polypeptide N-acetylgalactosaminyltransferase 4 (589 aa).

Residues 1–11 (MLPRMLKMKTV) are Cytoplasmic-facing. A helical; Signal-anchor for type II membrane protein transmembrane segment spans residues 12 to 31 (GTVLAVIWLFGLAFIYVQST). Topologically, residues 32-589 (SSSLRPPGRH…WIFEKLDTYE (558 aa)) are lumenal. Positions 33-73 (SSLRPPGRHPPPLPQLDPLIPQNPPQNDEIRPKKSAPPIPT) are disordered. Disulfide bonds link Cys140–Cys369, Cys360–Cys438, Cys471–Cys488, Cys514–Cys531, and Cys553–Cys571. A catalytic subdomain A region spans residues 150-255 (MQPTTVIITY…QKWLEPLLAR (106 aa)). Substrate is bound by residues Asp191 and Arg216. Mn(2+) is bound at residue Asp239. Ser240 provides a ligand contact to substrate. His241 lines the Mn(2+) pocket. Residues 315 to 377 (PIRSPTMAGG…PCSRVGHVFR (63 aa)) form a catalytic subdomain B region. Substrate is bound at residue Trp346. A Mn(2+)-binding site is contributed by His374. Residues Arg377, His380, and Tyr382 each coordinate substrate. The Ricin B-type lectin domain occupies 458–589 (TPGKSFQMKI…WIFEKLDTYE (132 aa)). N-linked (GlcNAc...) asparagine glycosylation occurs at Asn523.

It belongs to the glycosyltransferase 2 family. GalNAc-T subfamily. Mn(2+) serves as cofactor.

Its subcellular location is the golgi apparatus membrane. The catalysed reaction is L-seryl-[protein] + UDP-N-acetyl-alpha-D-galactosamine = a 3-O-[N-acetyl-alpha-D-galactosaminyl]-L-seryl-[protein] + UDP + H(+). The enzyme catalyses L-threonyl-[protein] + UDP-N-acetyl-alpha-D-galactosamine = a 3-O-[N-acetyl-alpha-D-galactosaminyl]-L-threonyl-[protein] + UDP + H(+). It functions in the pathway protein modification; protein glycosylation. In terms of biological role, catalyzes the initial reaction in O-linked oligosaccharide biosynthesis, the transfer of an N-acetyl-D-galactosamine residue to a serine or threonine residue on the protein receptor. This Caenorhabditis elegans protein is Polypeptide N-acetylgalactosaminyltransferase 4 (gly-4).